The chain runs to 806 residues: G-type lectin S-receptor-like serine/threonine-protein kinase At1g61430 (806 aa).

Positions Met1–Ala24 are cleaved as a signal peptide. The Bulb-type lectin domain occupies Gly25–Phe144. Topologically, residues Gly25–Thr425 are extracellular. 4 N-linked (GlcNAc...) asparagine glycosylation sites follow: Asn53, Asn94, Asn117, and Asn236. An EGF-like domain is found at Pro277–Lys313. Cystine bridges form between Cys281-Cys293 and Cys287-Cys301. N-linked (GlcNAc...) asparagine glycosylation is found at Asn319, Asn335, and Asn374. The 83-residue stretch at Cys332 to Arg414 folds into the PAN domain. 2 disulfide bridges follow: Cys367/Cys388 and Cys371/Cys377. The chain crosses the membrane as a helical span at residues Ile426 to Phe446. The Cytoplasmic portion of the chain corresponds to Trp447 to Arg806. The 289-residue stretch at Phe489 to Phe777 folds into the Protein kinase domain. ATP-binding positions include Leu495–Val503 and Lys520. Residues Ser526 and Ser541 each carry the phosphoserine modification. Residues Arg581 to Ile598 are caM-binding. Residue Asp617 is the Proton acceptor of the active site. 2 positions are modified to phosphoserine: Ser621 and Ser634. A Phosphothreonine modification is found at Thr651. Residues Ser694, Ser695, and Ser788 each carry the phosphoserine modification.

The protein belongs to the protein kinase superfamily. Ser/Thr protein kinase family.

It is found in the cell membrane. It carries out the reaction L-seryl-[protein] + ATP = O-phospho-L-seryl-[protein] + ADP + H(+). The enzyme catalyses L-threonyl-[protein] + ATP = O-phospho-L-threonyl-[protein] + ADP + H(+). The polypeptide is G-type lectin S-receptor-like serine/threonine-protein kinase At1g61430 (Arabidopsis thaliana (Mouse-ear cress)).